We begin with the raw amino-acid sequence, 507 residues long: Putative pentatricopeptide repeat-containing protein At3g16710, mitochondrial (507 aa).

A mitochondrion-targeting transit peptide spans 1–48 (MRRSIATGFASIVKGFHLHSHRHRLQISNPRTAASLSLCGFCFWIRAF). PPR repeat units follow at residues 47-81 (AFSSYRKILRNGLHNLQFNDALDLFTRMVHSRPLP), 82-116 (SIIDFTRLLSVIAKMNRYDVVISLFEQMQILGIPP), 117-151 (LLCTCNIVMHCVCLSSQPCRASCFLGKMMKLGFEP), 152-186 (DLVTFTSLLNGYCHWNRIEDAIALFDQILGMGFKP), 187-221 (NVVTYTTLIRCLCKNRHLNHAVELFNQMGTNGSRP), 222-256 (NVVTYNALVTGLCEIGRWGDAAWLLRDMMKRRIEP), 257-291 (NVITFTALIDAFVKVGKLMEAKELYNVMIQMSVYP), 292-326 (DVFTYGSLINGLCMYGLLDEARQMFYLMERNGCYP), 327-361 (NEVIYTTLIHGFCKSKRVEDGMKIFYEMSQKGVVA), 362-396 (NTITYTVLIQGYCLVGRPDVAQEVFNQMSSRRAPP), 397-431 (DIRTYNVLLDGLCCNGKVEKALMIFEYMRKREMDI), 432-466 (NIVTYTIIIQGMCKLGKVEDAFDLFCSLFSKGMKP), and 467-501 (NVITYTTMISGFCRRGLIHEADSLFKKMKEDGFLP).

It belongs to the PPR family. P subfamily.

Its subcellular location is the mitochondrion. The sequence is that of Putative pentatricopeptide repeat-containing protein At3g16710, mitochondrial from Arabidopsis thaliana (Mouse-ear cress).